The chain runs to 529 residues: Bifunctional purine biosynthesis protein PurH (529 aa).

Residues Met1–Val148 enclose the MGS-like domain. The residue at position 287 (Lys287) is an N6-acetyllysine.

It belongs to the PurH family.

It catalyses the reaction (6R)-10-formyltetrahydrofolate + 5-amino-1-(5-phospho-beta-D-ribosyl)imidazole-4-carboxamide = 5-formamido-1-(5-phospho-D-ribosyl)imidazole-4-carboxamide + (6S)-5,6,7,8-tetrahydrofolate. The catalysed reaction is IMP + H2O = 5-formamido-1-(5-phospho-D-ribosyl)imidazole-4-carboxamide. It participates in purine metabolism; IMP biosynthesis via de novo pathway; 5-formamido-1-(5-phospho-D-ribosyl)imidazole-4-carboxamide from 5-amino-1-(5-phospho-D-ribosyl)imidazole-4-carboxamide (10-formyl THF route): step 1/1. The protein operates within purine metabolism; IMP biosynthesis via de novo pathway; IMP from 5-formamido-1-(5-phospho-D-ribosyl)imidazole-4-carboxamide: step 1/1. The sequence is that of Bifunctional purine biosynthesis protein PurH from Escherichia coli O127:H6 (strain E2348/69 / EPEC).